A 70-amino-acid polypeptide reads, in one-letter code: UPF0270 protein VV1_1320 (70 aa).

The protein belongs to the UPF0270 family.

In Vibrio vulnificus (strain CMCP6), this protein is UPF0270 protein VV1_1320.